We begin with the raw amino-acid sequence, 510 residues long: Adenosine deaminase 2 (510 aa).

Residues 1–24 (MSGWPVLPALLLAVAMSSFHSATS) form the signal peptide. The dimerization stretch occupies residues 25 to 95 (RDEERNRLLM…GLMEKSAVFN (71 aa)). Residues histidine 107 and histidine 109 each coordinate Zn(2+). Position 110 (aspartate 110) interacts with substrate. N-linked (GlcNAc...) asparagine glycosylation is present at asparagine 122. Positions 122 to 182 (NATYRPYCYF…TEFDNSLLRT (61 aa)) are PRB domain. A disulfide bridge connects residues cysteine 132 and cysteine 156. N-linked (GlcNAc...) asparagine glycosylation occurs at asparagine 171. Residues 201–208 (WKKFKTIF), histidine 290, and glycine 323 contribute to the substrate site. Histidine 353 contributes to the Zn(2+) binding site. Glutamate 356 acts as the Proton donor in catalysis. Residue asparagine 375 is glycosylated (N-linked (GlcNAc...) asparagine). Histidine 381 acts as the Proton acceptor in catalysis. Position 438 (aspartate 438) interacts with Zn(2+). Residue aspartate 439 coordinates substrate.

This sequence belongs to the metallo-dependent hydrolases superfamily. Adenosine and AMP deaminases family. ADGF subfamily. As to quaternary structure, homodimer. Interacts with adenosine receptors. Binds heparin. Requires Zn(2+) as cofactor.

It localises to the secreted. It catalyses the reaction adenosine + H2O + H(+) = inosine + NH4(+). Adenosine deaminase that may contribute to the degradation of extracellular adenosine, a signaling molecule that controls a variety of cellular responses. Requires elevated adenosine levels for optimal enzyme activity. Binds to cell surfaces via proteoglycans and may play a role in the regulation of cell proliferation and differentiation, independently of its enzyme activity. The sequence is that of Adenosine deaminase 2 from Sus scrofa (Pig).